A 391-amino-acid chain; its full sequence is Alkanesulfonate monooxygenase (391 aa).

It belongs to the SsuD family.

It carries out the reaction an alkanesulfonate + FMNH2 + O2 = an aldehyde + FMN + sulfite + H2O + 2 H(+). Its function is as follows. Catalyzes the desulfonation of aliphatic sulfonates. This is Alkanesulfonate monooxygenase from Rhodopseudomonas palustris (strain ATCC BAA-98 / CGA009).